Reading from the N-terminus, the 23-residue chain is Alyteserin-1c (23 aa).

Serine amide is present on Ser-23.

Expressed by the skin glands.

It localises to the secreted. Its subcellular location is the target cell membrane. In terms of biological role, antibacterial peptide with amphipathic alpha-helical structure that shows selective growth-inhibitory activity against Gram-negative bacteria but low hemolytic activity against human erythrocytes (LC(50)=145-220 uM). It is moderately active against the Gram-negative bacteria E.coli (MIC=25 uM), K.pneumoniae (MIC=50 uM), P.aeruginosa (MIC=25 uM), A.baumannii (MIC=6 uM), and is weaky active against the Gram-positive S.aureus (MIC=100-250 uM). The chain is Alyteserin-1c from Alytes obstetricans (Common midwife toad).